The primary structure comprises 616 residues: Tumor necrosis factor receptor superfamily member 11A (616 aa).

Positions 1–29 (MAPRARRRRPLFALLLLCALLARLQVALQ) are cleaved as a signal peptide. At 30-212 (IAPPCTSEKH…PPNEPHVYLP (183 aa)) the chain is on the extracellular side. Disulfide bonds link Cys34–Cys46, Cys47–Cys60, Cys50–Cys68, Cys71–Cys86, Cys92–Cys112, Cys114–Cys127, Cys124–Cys126, Cys133–Cys151, and Cys154–Cys169. 4 TNFR-Cys repeats span residues 34-68 (CTSEKHYEHLGRCCNKCEPGKYMSSKCTTTSDSVC), 71-112 (CGPD…PRRC), 114-151 (CTAGYHWSQDCECCRRNTECAPGLGAQHPLQLNKDTVC), and 154-194 (CLAG…DAVC). N-linked (GlcNAc...) asparagine glycosylation is present at Asn105. Residues Cys133, Ala134, and Ser160 each coordinate Na(+). N-linked (GlcNAc...) asparagine glycosylation occurs at Asn174. Residues Cys175 and Cys194 are joined by a disulfide bond. Residues 213 to 233 (GLIILLLFASVALVAAIIFGV) form a helical membrane-spanning segment. Over 234-616 (CYRKKGKALT…PVQEQGGAKA (383 aa)) the chain is Cytoplasmic. The interval 468-536 (PLPQCAYGMG…GNSNSTFISS (69 aa)) is disordered. Residues 483–493 (EASRTEARDQP) show a composition bias toward basic and acidic residues. Over residues 499-508 (GRLPSSARAG) the composition is skewed to low complexity. The segment covering 524–536 (NVTGNSNSTFISS) has biased composition (polar residues). The required for interaction with EEIG1 and osteoclast differentiation stretch occupies residues 544–549 (GDIIVV). Positions 556-616 (QEGAAAAAEP…PVQEQGGAKA (61 aa)) are disordered. Residues 570-580 (VQEETLARRDS) are compositionally biased toward basic and acidic residues. Position 580 is a phosphoserine (Ser580).

As to quaternary structure, binds to the clefts between the subunits of the TNFSF11 ligand trimer to form a heterohexamer. Part of a complex composed of EEIG1, TNFRSF11A/RANK, PLCG2, GAB2, TEC and BTK; complex formation increases in the presence of TNFSF11/RANKL. Interacts with TRAF1, TRAF2, TRAF3, TRAF5 and TRAF6. Interacts (via cytoplasmic domain) with GAB2. Interacts (via cytoplasmic domain); with EEIG1 (via N-terminus); when in the presence of TNFSF11/RANKL. Ubiquitous expression with high levels in skeletal muscle, thymus, liver, colon, small intestine and adrenal gland.

The protein localises to the cell membrane. It localises to the membrane raft. In terms of biological role, receptor for TNFSF11/RANKL/TRANCE/OPGL; essential for RANKL-mediated osteoclastogenesis. Its interaction with EEIG1 promotes osteoclastogenesis via facilitating the transcription of NFATC1 and activation of PLCG2. Involved in the regulation of interactions between T-cells and dendritic cells. This chain is Tumor necrosis factor receptor superfamily member 11A (TNFRSF11A), found in Homo sapiens (Human).